The primary structure comprises 151 residues: MRSYDFSPLWRSTIGFDRLFDLAESAQRATEDNYPPYNIERLGDDRYQISLAVAGFSPDEISVTAEQNVVTIEGNKTDKTEREFMYRGISTRAFKRQFNLADYVQVKNASFDNGLLKIELVREIPEAMKPRRIAINGATSDNLHKLESRAA.

The region spanning 28–138 (RATEDNYPPY…KPRRIAINGA (111 aa)) is the sHSP domain.

Belongs to the small heat shock protein (HSP20) family.

This Bradyrhizobium diazoefficiens (strain JCM 10833 / BCRC 13528 / IAM 13628 / NBRC 14792 / USDA 110) protein is Small heat shock protein HspD (hspD).